Consider the following 354-residue polypeptide: Histidinol-phosphate aminotransferase (354 aa).

The residue at position 210 (lysine 210) is an N6-(pyridoxal phosphate)lysine.

The protein belongs to the class-II pyridoxal-phosphate-dependent aminotransferase family. Histidinol-phosphate aminotransferase subfamily. Homodimer. Pyridoxal 5'-phosphate is required as a cofactor.

The enzyme catalyses L-histidinol phosphate + 2-oxoglutarate = 3-(imidazol-4-yl)-2-oxopropyl phosphate + L-glutamate. It functions in the pathway amino-acid biosynthesis; L-histidine biosynthesis; L-histidine from 5-phospho-alpha-D-ribose 1-diphosphate: step 7/9. This is Histidinol-phosphate aminotransferase from Clostridium botulinum (strain Langeland / NCTC 10281 / Type F).